Here is a 660-residue protein sequence, read N- to C-terminus: Bifunctional polymyxin resistance protein ArnA (660 aa).

The segment at 1 to 304 is formyltransferase ArnAFT; sequence MKTVVFAYHD…TLGLVQGSRL (304 aa). 86–88 provides a ligand contact to (6R)-10-formyltetrahydrofolate; the sequence is HLI. His-104 serves as the catalytic Proton donor; for formyltransferase activity. (6R)-10-formyltetrahydrofolate-binding positions include Arg-114 and 136 to 140; that span reads VKRAD. The interval 314–660 is dehydrogenase ArnADH; sequence RRTRVLILGV…RTVDLTDKPL (347 aa). NAD(+) is bound by residues Asp-347 and 368–369; that span reads DI. UDP-alpha-D-glucuronate contacts are provided by residues Ala-393, Tyr-398, and 432–433; that span reads TS. Glu-434 functions as the Proton acceptor; for decarboxylase activity in the catalytic mechanism. Residues Arg-460, Asn-492, 526–535, and Tyr-613 contribute to the UDP-alpha-D-glucuronate site; that span reads KLIDGGKQKR. Arg-619 (proton donor; for decarboxylase activity) is an active-site residue.

In the N-terminal section; belongs to the Fmt family. UDP-L-Ara4N formyltransferase subfamily. The protein in the C-terminal section; belongs to the NAD(P)-dependent epimerase/dehydratase family. UDP-glucuronic acid decarboxylase subfamily. As to quaternary structure, homohexamer, formed by a dimer of trimers.

It carries out the reaction UDP-alpha-D-glucuronate + NAD(+) = UDP-beta-L-threo-pentopyranos-4-ulose + CO2 + NADH. The catalysed reaction is UDP-4-amino-4-deoxy-beta-L-arabinose + (6R)-10-formyltetrahydrofolate = UDP-4-deoxy-4-formamido-beta-L-arabinose + (6S)-5,6,7,8-tetrahydrofolate + H(+). It functions in the pathway nucleotide-sugar biosynthesis; UDP-4-deoxy-4-formamido-beta-L-arabinose biosynthesis; UDP-4-deoxy-4-formamido-beta-L-arabinose from UDP-alpha-D-glucuronate: step 1/3. Its pathway is nucleotide-sugar biosynthesis; UDP-4-deoxy-4-formamido-beta-L-arabinose biosynthesis; UDP-4-deoxy-4-formamido-beta-L-arabinose from UDP-alpha-D-glucuronate: step 3/3. It participates in bacterial outer membrane biogenesis; lipopolysaccharide biosynthesis. Functionally, bifunctional enzyme that catalyzes the oxidative decarboxylation of UDP-glucuronic acid (UDP-GlcUA) to UDP-4-keto-arabinose (UDP-Ara4O) and the addition of a formyl group to UDP-4-amino-4-deoxy-L-arabinose (UDP-L-Ara4N) to form UDP-L-4-formamido-arabinose (UDP-L-Ara4FN). The modified arabinose is attached to lipid A and is required for resistance to polymyxin and cationic antimicrobial peptides. This chain is Bifunctional polymyxin resistance protein ArnA, found in Escherichia coli O6:K15:H31 (strain 536 / UPEC).